We begin with the raw amino-acid sequence, 387 residues long: Succinate--CoA ligase [ADP-forming] subunit beta (387 aa).

Residues 9 to 245 (KDLLESYGLK…KSQENAKELK (237 aa)) form the ATP-grasp domain. Residues K46, 53 to 55 (GRG), E100, Y103, and E108 each bind ATP. 2 residues coordinate Mg(2+): N200 and D214. Residues N265 and 322–324 (GIV) each bind substrate.

It belongs to the succinate/malate CoA ligase beta subunit family. In terms of assembly, heterotetramer of two alpha and two beta subunits. Mg(2+) serves as cofactor.

The enzyme catalyses succinate + ATP + CoA = succinyl-CoA + ADP + phosphate. The catalysed reaction is GTP + succinate + CoA = succinyl-CoA + GDP + phosphate. It participates in carbohydrate metabolism; tricarboxylic acid cycle; succinate from succinyl-CoA (ligase route): step 1/1. Succinyl-CoA synthetase functions in the citric acid cycle (TCA), coupling the hydrolysis of succinyl-CoA to the synthesis of either ATP or GTP and thus represents the only step of substrate-level phosphorylation in the TCA. The beta subunit provides nucleotide specificity of the enzyme and binds the substrate succinate, while the binding sites for coenzyme A and phosphate are found in the alpha subunit. In Francisella tularensis subsp. tularensis (strain FSC 198), this protein is Succinate--CoA ligase [ADP-forming] subunit beta.